The sequence spans 309 residues: Small ribosomal subunit biogenesis GTPase RsgA (309 aa).

In terms of domain architecture, CP-type G spans glutamate 64–tyrosine 225. GTP-binding positions include serine 113–aspartate 116 and glycine 168–threonine 176. Zn(2+) contacts are provided by cysteine 249, cysteine 254, histidine 256, and cysteine 262.

Belongs to the TRAFAC class YlqF/YawG GTPase family. RsgA subfamily. Monomer. Associates with 30S ribosomal subunit, binds 16S rRNA. Zn(2+) is required as a cofactor.

It localises to the cytoplasm. In terms of biological role, one of several proteins that assist in the late maturation steps of the functional core of the 30S ribosomal subunit. Helps release RbfA from mature subunits. May play a role in the assembly of ribosomal proteins into the subunit. Circularly permuted GTPase that catalyzes slow GTP hydrolysis, GTPase activity is stimulated by the 30S ribosomal subunit. The chain is Small ribosomal subunit biogenesis GTPase RsgA from Pediococcus pentosaceus (strain ATCC 25745 / CCUG 21536 / LMG 10740 / 183-1w).